A 142-amino-acid polypeptide reads, in one-letter code: Hemoglobin subunit alpha-A (142 aa).

Residues 2–142 (VLSANDKTNV…VGNVLTAKYR (141 aa)) form the Globin domain. His-59 provides a ligand contact to O2. His-88 serves as a coordination point for heme b.

Belongs to the globin family. In terms of assembly, heterotetramer of two alpha chains and two beta chains. In terms of tissue distribution, red blood cells.

Functionally, involved in oxygen transport from the lung to the various peripheral tissues. The protein is Hemoglobin subunit alpha-A (HBAA) of Accipiter gentilis (Northern goshawk).